We begin with the raw amino-acid sequence, 414 residues long: MENGATTTSTITIKGILSLLMESITTEEDEGGKRVISLGMGDPTLYSCFRTTQVSLQAVSDSLLSNKFHGYSPTVGLPQARRAIAEYLSRDLPYKLSQDDVFITSGCTQAIDVALSMLARPRANILLPRPGFPIYELCAKFRHLEVRYVDLLPENGWEIDLDAVEALADENTVALVVINPGNPCGNVYSYQHLMKIAESAKKLGFLVIADEVYGHLAFGSKPFVPMGVFGSIVPVLTLGSLSKRWIVPGWRLGWFVTTDPSGSFKDPKIIERFKKYFDILGGPATFIQAAVPTILEQTDESFFKKTLNSLKNSSDICCDWIKEIPCIDSSHRPEGSMAMMVKLNLSLLEDVSDDIDFCFKLAREESVILLPGTAVGLKNWLRITFAADATSIEEAFKRIKCFYLRHAKTQYPTI.

Belongs to the class-I pyridoxal-phosphate-dependent aminotransferase family. The cofactor is pyridoxal 5'-phosphate.

The polypeptide is Probable aminotransferase TAT2 (Arabidopsis thaliana (Mouse-ear cress)).